We begin with the raw amino-acid sequence, 135 residues long: Large ribosomal subunit protein bL19 (135 aa).

Belongs to the bacterial ribosomal protein bL19 family.

Functionally, this protein is located at the 30S-50S ribosomal subunit interface and may play a role in the structure and function of the aminoacyl-tRNA binding site. The polypeptide is Large ribosomal subunit protein bL19 (Xanthomonas axonopodis pv. citri (strain 306)).